A 500-amino-acid polypeptide reads, in one-letter code: Probable cytosol aminopeptidase (500 aa).

Residues Lys-261 and Asp-266 each contribute to the Mn(2+) site. Residue Lys-273 is part of the active site. The Mn(2+) site is built by Asp-284, Asp-343, and Glu-345. Arg-347 is a catalytic residue.

The protein belongs to the peptidase M17 family. The cofactor is Mn(2+).

Its subcellular location is the cytoplasm. The catalysed reaction is Release of an N-terminal amino acid, Xaa-|-Yaa-, in which Xaa is preferably Leu, but may be other amino acids including Pro although not Arg or Lys, and Yaa may be Pro. Amino acid amides and methyl esters are also readily hydrolyzed, but rates on arylamides are exceedingly low.. It catalyses the reaction Release of an N-terminal amino acid, preferentially leucine, but not glutamic or aspartic acids.. Its function is as follows. Presumably involved in the processing and regular turnover of intracellular proteins. Catalyzes the removal of unsubstituted N-terminal amino acids from various peptides. This chain is Probable cytosol aminopeptidase, found in Wolbachia pipientis wMel.